The chain runs to 409 residues: DNA primase small subunit (409 aa).

Active-site residues include Glu-46, Asp-111, and Asp-113. A Zinc knuckle motif motif is present at residues 123–133 (CCSGAQVCSKC).

It belongs to the eukaryotic-type primase small subunit family. DNA polymerase alpha:primase is a four subunit enzyme complex, which is assembled throughout the cell cycle, and consists of the two DNA polymerase subunits A POL1 and B POL12, and the DNA primase large PRI2 and small PRI1 subunits.

Its function is as follows. DNA primase is the polymerase that synthesizes small RNA primers for the Okazaki fragments made during discontinuous DNA replication. In a complex with DNA polymerase alpha (DNA polymerase alpha:primase) constitutes a replicative polymerase. Both primase components participate in formation of the active center, but the ATP-binding site is exclusively located on p48. The chain is DNA primase small subunit (PRI1) from Saccharomyces cerevisiae (strain ATCC 204508 / S288c) (Baker's yeast).